A 149-amino-acid polypeptide reads, in one-letter code: L-alanine exporter AlaE (149 aa).

4 helical membrane-spanning segments follow: residues 16 to 36 (FAMV…LSGM), 46 to 66 (LVAI…RDLF), 85 to 105 (ILAY…VVGA), and 112 to 132 (AAVS…GYFL).

This sequence belongs to the AlaE exporter family.

The protein localises to the cell inner membrane. Exports L-alanine. In Shigella flexneri, this protein is L-alanine exporter AlaE.